Consider the following 89-residue polypeptide: Elongation factor 1-beta (89 aa).

The protein belongs to the EF-1-beta/EF-1-delta family.

In terms of biological role, promotes the exchange of GDP for GTP in EF-1-alpha/GDP, thus allowing the regeneration of EF-1-alpha/GTP that could then be used to form the ternary complex EF-1-alpha/GTP/AAtRNA. This Methanococcus maripaludis (strain C6 / ATCC BAA-1332) protein is Elongation factor 1-beta.